The primary structure comprises 458 residues: tRNA-2-methylthio-N(6)-dimethylallyladenosine synthase (458 aa).

Residues glutamine 3 to cysteine 120 enclose the MTTase N-terminal domain. Positions 12, 49, 83, 157, 161, and 164 each coordinate [4Fe-4S] cluster. The Radical SAM core domain maps to arginine 143–lysine 375. The 64-residue stretch at alanine 378–glycine 441 folds into the TRAM domain.

Belongs to the methylthiotransferase family. MiaB subfamily. As to quaternary structure, monomer. [4Fe-4S] cluster is required as a cofactor.

It localises to the cytoplasm. It carries out the reaction N(6)-dimethylallyladenosine(37) in tRNA + (sulfur carrier)-SH + AH2 + 2 S-adenosyl-L-methionine = 2-methylsulfanyl-N(6)-dimethylallyladenosine(37) in tRNA + (sulfur carrier)-H + 5'-deoxyadenosine + L-methionine + A + S-adenosyl-L-homocysteine + 2 H(+). Its function is as follows. Catalyzes the methylthiolation of N6-(dimethylallyl)adenosine (i(6)A), leading to the formation of 2-methylthio-N6-(dimethylallyl)adenosine (ms(2)i(6)A) at position 37 in tRNAs that read codons beginning with uridine. This Methylococcus capsulatus (strain ATCC 33009 / NCIMB 11132 / Bath) protein is tRNA-2-methylthio-N(6)-dimethylallyladenosine synthase.